A 361-amino-acid polypeptide reads, in one-letter code: Septin-2 (361 aa).

The residue at position 17 (Y17) is a Phosphotyrosine. The Septin-type G domain maps to 34 to 306; that stretch reads KGFEFTLMVV…ENFRSERLKR (273 aa). The interval 44-51 is G1 motif; sequence GESGLGKS. Residues 44–51, T78, G104, and 183–191 each bind GTP; these read GESGLGKS and KADTLTLKE. The tract at residues 101-104 is G3 motif; sequence DTPG. Positions 182–185 are G4 motif; that stretch reads AKAD. K190 is subject to N6-acetyllysine. Y211 is subject to Phosphotyrosine. At S218 the chain carries Phosphoserine. Residues G241 and R256 each coordinate GTP. An important for dimerization region spans residues 260 to 270; it reads WGVVEVENPEH.

Belongs to the TRAFAC class TrmE-Era-EngA-EngB-Septin-like GTPase superfamily. Septin GTPase family. In terms of assembly, septins polymerize into heterooligomeric protein complexes that form filaments, and associate with cellular membranes, actin filaments and microtubules. GTPase activity is required for filament formation. Septin filaments are assembled from asymmetrical heterotrimers, composed of SEPTIN2, SEPTIN6 and SEPTIN7 that associate head-to-head to form a hexameric unit. Interaction between SEPTIN2 and SEPTIN7 seems indirect. Also interacts with SEPTIN9 and SEPTIN5. Interaction with SEPTIN4 not detected. Component of a septin core octameric complex consisting of SEPTIN12, SEPTIN7, SEPTIN6 and SEPTIN2 or SEPTIN4 in the order 12-7-6-2-2-6-7-12 or 12-7-6-4-4-6-7-12 and located in the sperm annulus. Interacts with MAP4. Interacts with DZIP1L.

The protein localises to the cytoplasm. It localises to the cytoskeleton. Its subcellular location is the spindle. It is found in the cleavage furrow. The protein resides in the midbody. The protein localises to the cell cortex. It localises to the cell projection. Its subcellular location is the cilium membrane. It is found in the cilium. The protein resides in the flagellum. Functionally, filament-forming cytoskeletal GTPase. Forms a filamentous structure with SEPTIN12, SEPTIN6, SEPTIN2 and probably SEPTIN4 at the sperm annulus which is required for the structural integrity and motility of the sperm tail during postmeiotic differentiation. Required for normal organization of the actin cytoskeleton. Plays a role in the biogenesis of polarized columnar-shaped epithelium by maintaining polyglutamylated microtubules, thus facilitating efficient vesicle transport, and by impeding MAP4 binding to tubulin. Required for the progression through mitosis. Forms a scaffold at the midplane of the mitotic splindle required to maintain CENPE localization at kinetochores and consequently chromosome congression. During anaphase, may be required for chromosome segregation and spindle elongation. Plays a role in ciliogenesis and collective cell movements. In cilia, required for the integrity of the diffusion barrier at the base of the primary cilium that prevents diffusion of transmembrane proteins between the cilia and plasma membranes: probably acts by regulating the assembly of the tectonic-like complex (also named B9 complex) by localizing TMEM231 protein. In Rattus norvegicus (Rat), this protein is Septin-2.